The following is a 360-amino-acid chain: LETM1 domain-containing protein 1 (360 aa).

Residues Met-1–Met-110 are required and sufficient for mitochondrial import. Residues Met-1–Lys-137 are Cytoplasmic-facing. The chain crosses the membrane as a helical span at residues Cys-138–Met-158. Residues Tyr-159 to Arg-360 lie on the Mitochondrial intermembrane side of the membrane. One can recognise a Letm1 RBD domain in the interval Leu-186 to Arg-360.

As to quaternary structure, interacts with BRI3BP. Interacts (via C-terminal) with SMARCA4; the interaction regulates transcriptional expression of thermogenic genes in brown adipose tissue.

It is found in the mitochondrion outer membrane. It localises to the nucleus. The protein localises to the mitochondrion inner membrane. Plays an essential role for mitochondrial structure and function, as well as thermogenesis of brown adipocytes. In brown adipose tissue also localizes in the nucleus where it interacts with the chromatin remodeler SMARCA4 to regulate thermogenic genes expression, such as UCP1. May regulate phagocytosis and inflammatory responses to lipopolysaccharide in macrophages. Involved in tumorigenesis and may function as a negative regulator of the p53/TP53. In Bos taurus (Bovine), this protein is LETM1 domain-containing protein 1.